Reading from the N-terminus, the 511-residue chain is Maturase K (511 aa).

It belongs to the intron maturase 2 family. MatK subfamily.

Its subcellular location is the plastid. It localises to the chloroplast. Functionally, usually encoded in the trnK tRNA gene intron. Probably assists in splicing its own and other chloroplast group II introns. The sequence is that of Maturase K from Mandragora officinarum (Mandrake).